The sequence spans 727 residues: Glycerol-3-phosphate dehydrogenase, mitochondrial (727 aa).

A mitochondrion-targeting transit peptide spans 1 to 42 (MAFQKAVKGTILVGGGALATVLGLSQFAHYRRKQMNLAYVKA). 71-99 (DILVIGGGATGSGCALDAVTRGLKTALVE) is a binding site for FAD. Phosphotyrosine is present on Tyr601. EF-hand domains follow at residues 623-658 (SDID…INVQ) and 659-694 (MDEN…IQKG). The Ca(2+) site is built by Asp672, Asn674, Asn676, Gln678, and Glu683.

Belongs to the FAD-dependent glycerol-3-phosphate dehydrogenase family. The cofactor is FAD.

The protein localises to the mitochondrion. It carries out the reaction a quinone + sn-glycerol 3-phosphate = dihydroxyacetone phosphate + a quinol. Its pathway is polyol metabolism; glycerol degradation via glycerol kinase pathway; glycerone phosphate from sn-glycerol 3-phosphate (aerobic route): step 1/1. With respect to regulation, calcium-binding enhance the activity of the enzyme. Functionally, calcium-responsive mitochondrial glycerol-3-phosphate dehydrogenase which seems to be a key component of the pancreatic beta-cell glucose-sensing device. The protein is Glycerol-3-phosphate dehydrogenase, mitochondrial (GPD2) of Macaca fascicularis (Crab-eating macaque).